The sequence spans 242 residues: Tyrosine recombinase XerD-like (242 aa).

The Core-binding (CB) domain maps to 1-71 (MKEAIDQFIQ…AVNQFLYFLY (71 aa)). Residues 90 to 242 (ENSSQGSLLD…KSITTLEKYR (153 aa)) form the Tyr recombinase domain. Residues lysine 148 and arginine 209 contribute to the active site. The active-site O-(3'-phospho-DNA)-tyrosine intermediate is the tyrosine 241.

Belongs to the 'phage' integrase family. XerD-like subfamily.

The protein resides in the cytoplasm. Its function is as follows. Putative tyrosine recombinase. Not involved in the cutting and rejoining of the recombining DNA molecules on dif(SL) site. The sequence is that of Tyrosine recombinase XerD-like from Streptococcus gordonii (strain Challis / ATCC 35105 / BCRC 15272 / CH1 / DL1 / V288).